A 338-amino-acid chain; its full sequence is Probable beta-1,4-xylosyltransferase IRX9 (338 aa).

The disordered stretch occupies residues 1 to 21 (MASAGGCKKKTGNSRSRSPRS). Residues 1–27 (MASAGGCKKKTGNSRSRSPRSPVVLRR) are Cytoplasmic-facing. A helical; Signal-anchor for type II membrane protein transmembrane segment spans residues 28–46 (AMLHSSLCFLVGLLAGLAA). Residues 47–338 (PSDWPAAAGA…IMLWRIQTTL (292 aa)) are Lumenal-facing. 2 N-linked (GlcNAc...) asparagine glycosylation sites follow: asparagine 232 and asparagine 314.

It belongs to the glycosyltransferase 43 family.

It localises to the golgi apparatus membrane. Functionally, probable beta-1,4-xylosyltransferase involved in xylan biosynthesis in cell walls. This is Probable beta-1,4-xylosyltransferase IRX9 from Oryza sativa subsp. japonica (Rice).